Reading from the N-terminus, the 369-residue chain is Peptide chain release factor 2 (369 aa).

Gln251 bears the N5-methylglutamine mark.

This sequence belongs to the prokaryotic/mitochondrial release factor family. In terms of processing, methylated by PrmC. Methylation increases the termination efficiency of RF2.

The protein resides in the cytoplasm. In terms of biological role, peptide chain release factor 2 directs the termination of translation in response to the peptide chain termination codons UGA and UAA. The protein is Peptide chain release factor 2 of Chlamydia trachomatis serovar A (strain ATCC VR-571B / DSM 19440 / HAR-13).